Here is a 932-residue protein sequence, read N- to C-terminus: Glycine dehydrogenase (decarboxylating) (932 aa).

Position 685 is an N6-(pyridoxal phosphate)lysine (Lys-685).

Belongs to the GcvP family. The glycine cleavage system is composed of four proteins: P, T, L and H. Requires pyridoxal 5'-phosphate as cofactor.

The catalysed reaction is N(6)-[(R)-lipoyl]-L-lysyl-[glycine-cleavage complex H protein] + glycine + H(+) = N(6)-[(R)-S(8)-aminomethyldihydrolipoyl]-L-lysyl-[glycine-cleavage complex H protein] + CO2. In terms of biological role, the glycine cleavage system catalyzes the degradation of glycine. The P protein binds the alpha-amino group of glycine through its pyridoxal phosphate cofactor; CO(2) is released and the remaining methylamine moiety is then transferred to the lipoamide cofactor of the H protein. This is Glycine dehydrogenase (decarboxylating) from Brucella suis (strain ATCC 23445 / NCTC 10510).